We begin with the raw amino-acid sequence, 403 residues long: D-alanyl-D-alanine carboxypeptidase DacA (403 aa).

A signal peptide spans 1 to 29; the sequence is MNTIFSARIMKRLALTTALCTAFISAAHA. Catalysis depends on serine 73, which acts as the Acyl-ester intermediate. Catalysis depends on lysine 76, which acts as the Proton acceptor. Residue serine 139 is part of the active site. Residue lysine 242 coordinates substrate.

The protein belongs to the peptidase S11 family.

The protein localises to the cell inner membrane. The catalysed reaction is Preferential cleavage: (Ac)2-L-Lys-D-Ala-|-D-Ala. Also transpeptidation of peptidyl-alanyl moieties that are N-acyl substituents of D-alanine.. It functions in the pathway cell wall biogenesis; peptidoglycan biosynthesis. Its function is as follows. Removes C-terminal D-alanyl residues from sugar-peptide cell wall precursors. The protein is D-alanyl-D-alanine carboxypeptidase DacA (dacA) of Escherichia coli O157:H7.